Consider the following 248-residue polypeptide: Protein maestro (248 aa).

The tract at residues 1–21 (MDQRQRRILGQPLSIPTSQPK) is disordered. An HEAT repeat occupies 128–163 (SFFIDITLQTRTLLDDENDSLRYSAFVLFGQLAAFA).

In terms of tissue distribution, ubiquitous.

The protein resides in the nucleus. Its subcellular location is the nucleolus. The chain is Protein maestro (MRO) from Homo sapiens (Human).